A 131-amino-acid chain; its full sequence is Small ribosomal subunit protein uS8 (131 aa).

This sequence belongs to the universal ribosomal protein uS8 family. Part of the 30S ribosomal subunit. Contacts proteins S5 and S12.

Functionally, one of the primary rRNA binding proteins, it binds directly to 16S rRNA central domain where it helps coordinate assembly of the platform of the 30S subunit. This Polaromonas sp. (strain JS666 / ATCC BAA-500) protein is Small ribosomal subunit protein uS8.